Here is a 443-residue protein sequence, read N- to C-terminus: Structure-specific endonuclease subunit SLX1 (443 aa).

The GIY-YIG domain maps to 13-93; it reads RVYVCYCLRS…QKPHASRHLR (81 aa). The segment at 121-140 is disordered; the sequence is FPATRSSAPSSAASHDSGLN. The SLX1-type zinc finger occupies 361 to 419; sequence CGLCGGHINRHVPLSYTHCPHACDAVFHLTCLARYSLEQETRAHARTFCLPTSAWCPMC.

Belongs to the SLX1 family. In terms of assembly, forms a heterodimer with SLX4. Requires a divalent metal cation as cofactor.

Its subcellular location is the nucleus. Functionally, catalytic subunit of the SLX1-SLX4 structure-specific endonuclease that resolves DNA secondary structures generated during DNA repair and recombination. Has endonuclease activity towards branched DNA substrates, introducing single-strand cuts in duplex DNA close to junctions with ss-DNA. The sequence is that of Structure-specific endonuclease subunit SLX1 from Malassezia globosa (strain ATCC MYA-4612 / CBS 7966) (Dandruff-associated fungus).